Consider the following 146-residue polypeptide: D-aminoacyl-tRNA deacylase (146 aa).

Positions 137–138 (GP) match the Gly-cisPro motif, important for rejection of L-amino acids motif.

Belongs to the DTD family. Homodimer.

Its subcellular location is the cytoplasm. The catalysed reaction is glycyl-tRNA(Ala) + H2O = tRNA(Ala) + glycine + H(+). It catalyses the reaction a D-aminoacyl-tRNA + H2O = a tRNA + a D-alpha-amino acid + H(+). Functionally, an aminoacyl-tRNA editing enzyme that deacylates mischarged D-aminoacyl-tRNAs. Also deacylates mischarged glycyl-tRNA(Ala), protecting cells against glycine mischarging by AlaRS. Acts via tRNA-based rather than protein-based catalysis; rejects L-amino acids rather than detecting D-amino acids in the active site. By recycling D-aminoacyl-tRNA to D-amino acids and free tRNA molecules, this enzyme counteracts the toxicity associated with the formation of D-aminoacyl-tRNA entities in vivo and helps enforce protein L-homochirality. In Acinetobacter baylyi (strain ATCC 33305 / BD413 / ADP1), this protein is D-aminoacyl-tRNA deacylase.